The following is a 639-amino-acid chain: Ubiquitin-like modifier-activating enzyme ATG7 (639 aa).

The short motif at 322–327 is the GXGXXG motif element; sequence GAGTLG. C502 serves as the catalytic Glycyl thioester intermediate.

It belongs to the ATG7 family. In terms of assembly, homodimer.

It localises to the cytoplasm. The protein localises to the preautophagosomal structure. Functionally, E1-like activating enzyme involved in the 2 ubiquitin-like systems required for cytoplasm to vacuole transport (Cvt) and autophagy. Activates ATG12 for its conjugation with ATG5 and ATG8 for its conjugation with phosphatidylethanolamine. Both systems are needed for the ATG8 association to Cvt vesicles and autophagosomes membranes. Autophagy is essential for maintenance of amino acid levels and protein synthesis under nitrogen starvation. Required for selective autophagic degradation of the nucleus (nucleophagy) as well as for mitophagy which contributes to regulate mitochondrial quantity and quality by eliminating the mitochondria to a basal level to fulfill cellular energy requirements and preventing excess ROS production. Plays a role in the regulation of filamentous growth and chronological longevity. This is Ubiquitin-like modifier-activating enzyme ATG7 (APG7) from Candida albicans (strain SC5314 / ATCC MYA-2876) (Yeast).